A 253-amino-acid polypeptide reads, in one-letter code: MGEFNEKKTTCGTVCLKYLLFTYNCCFWLAGLAVMAVGIWTLALKSDYISLLASGTYLATAYILVVAGTVVMVTGVLGCCATFKERRNLLRLYFILLLIIFLLEIIAGILAYAYYQQLNTELKENLKDTMTKRYHQPGHEAVTSAVDQLQQEFHCCGSNNSQDWRDSEWIRSQEAGGRVVPDSCCKTVVALCGQRDHASNIYKVEGGCITKLETFIQEHLRVIGAVGIGIACVQVFGMIFTCCLYRSLKLEHY.

The Cytoplasmic portion of the chain corresponds to 1-18; it reads MGEFNEKKTTCGTVCLKY. 2 S-palmitoyl cysteine lipidation sites follow: Cys-11 and Cys-15. Residues 19–39 traverse the membrane as a helical segment; the sequence is LLFTYNCCFWLAGLAVMAVGI. Residues 40–57 lie on the Extracellular side of the membrane; that stretch reads WTLALKSDYISLLASGTY. A helical transmembrane segment spans residues 58–78; it reads LATAYILVVAGTVVMVTGVLG. Residues 79-91 are Cytoplasmic-facing; it reads CCATFKERRNLLR. A helical transmembrane segment spans residues 92-112; the sequence is LYFILLLIIFLLEIIAGILAY. Topologically, residues 113-221 are extracellular; the sequence is AYYQQLNTEL…LETFIQEHLR (109 aa). N-linked (GlcNAc...) asparagine glycosylation is present at Asn-159. A helical membrane pass occupies residues 222–242; sequence VIGAVGIGIACVQVFGMIFTC. S-palmitoyl cysteine attachment occurs at residues Cys-242 and Cys-243. Residues 243 to 253 are Cytoplasmic-facing; it reads CLYRSLKLEHY.

Belongs to the tetraspanin (TM4SF) family. In terms of assembly, interacts with integrins ITGA3:ITGB1, ITGA5:ITGB1, ITGA3:ITGB1 and ITGA6:ITGB4 and with CD9 and CD181. Interacts (via the second extracellular domain) with integrin ITGAV:ITGB3. Interacts with ITGA3; this interaction modulates ITGA3 glycosylation pattern. Interacts with F11R. Interacts with RAC1 and CDC42; these interactions mediate physical association of RAC1 and CDC42 with integrin adhesion receptor complexes. Post-translationally, palmitoylated. Palmitoylation by ZDHHC2 regulates CD151 expression, association with other tetraspanin family proteins and function in cell adhesion. Ubiquitinated by RNF128 on lysine residues present in the tetraspanin amino terminus via 'Lys-48'-linked ubiquitin leading to proteasomal degradation. As to expression, expressed in a variety of tissues including vascular endothelium and epidermis. Expressed on erythroid cells, with a higher level of expression in erythroid precursors than on mature erythrocytes. Acts as a sensitive T-cell activation marker.

It localises to the cell membrane. Its function is as follows. Structural component of specialized membrane microdomains known as tetraspanin-enriched microdomains (TERMs), which act as platforms for receptor clustering and signaling. Plays a role in various cellular and molecular mechanism through its association with both integrin and non-integrin proteins. These interactions facilitate critical cellular functions, including cell-to-cell communication, wound healing, platelet aggregation, trafficking, cell motility, and angiogenesis. Via interaction with JAM-A/F11R and integrin ITGA3:ITGB1, promotes the recruitment of signaling molecules such as RAC1, CDC42 and RhoGTPases to facilitate the polarization of epithelial cells and the reorganization of the actin cytoskeleton, which are critical steps in cell migration process. Regulates the glycosylation pattern of ITGA3:ITGB1 thereby modulating its activity. Plays an essential role in the maintenance of central laminin-binding integrin ITGA6:ITGB4-containing adhesion complexes. Essential for the proper assembly of the glomerular and tubular basement membranes in kidney. Contributes to T-cell activation by modulating integrin signaling leading to activation of downstream targets PTK2 and MAPK1/MAPK3. In terms of biological role, (Microbial infection) Plays a role in human papillomavirus 16/HPV-16 endocytosis upon binding to cell surface receptor. (Microbial infection) Plays a role in human cytomegalovirus entry into host cell by contributing to entry receptor binding, membrane fusion, or release of the capsid. This Homo sapiens (Human) protein is CD151 antigen (CD151).